The sequence spans 95 residues: MIRSELIQKLSDENPHLYQRDVERIVNSIFEEVIDALAAGDRVELRGFGAFSVKKRDARIGRNPRTGESVSVEEKHVPFFKAGKLLRDRLNGHES.

This sequence belongs to the bacterial histone-like protein family. Heterodimer of an alpha and a beta chain.

This protein is one of the two subunits of integration host factor, a specific DNA-binding protein that functions in genetic recombination as well as in transcriptional and translational control. The protein is Integration host factor subunit beta of Jannaschia sp. (strain CCS1).